We begin with the raw amino-acid sequence, 265 residues long: Thiazole synthase (265 aa).

Lys103 functions as the Schiff-base intermediate with DXP in the catalytic mechanism. Residues Gly164, 190 to 191 (AG), and 212 to 213 (NT) each bind 1-deoxy-D-xylulose 5-phosphate.

Belongs to the ThiG family. In terms of assembly, homotetramer. Forms heterodimers with either ThiH or ThiS.

It is found in the cytoplasm. It carries out the reaction [ThiS sulfur-carrier protein]-C-terminal-Gly-aminoethanethioate + 2-iminoacetate + 1-deoxy-D-xylulose 5-phosphate = [ThiS sulfur-carrier protein]-C-terminal Gly-Gly + 2-[(2R,5Z)-2-carboxy-4-methylthiazol-5(2H)-ylidene]ethyl phosphate + 2 H2O + H(+). The protein operates within cofactor biosynthesis; thiamine diphosphate biosynthesis. Catalyzes the rearrangement of 1-deoxy-D-xylulose 5-phosphate (DXP) to produce the thiazole phosphate moiety of thiamine. Sulfur is provided by the thiocarboxylate moiety of the carrier protein ThiS. In vitro, sulfur can be provided by H(2)S. In Bordetella bronchiseptica (strain ATCC BAA-588 / NCTC 13252 / RB50) (Alcaligenes bronchisepticus), this protein is Thiazole synthase.